A 465-amino-acid chain; its full sequence is ATP-dependent rRNA helicase rrp3 (465 aa).

A disordered region spans residues 1–46; that stretch reads MSALKKRKITEKQPETNSDSEAESVSSRGSAKDETQTSGEEPAPAK. The span at 15 to 29 shows a compositional bias: polar residues; the sequence is ETNSDSEAESVSSRG. The short motif at 46-74 is the Q motif element; it reads KSFKELGIIDQLCEACENMGYKAPTPIQS. The Helicase ATP-binding domain occupies 77 to 248; sequence IPLALEGRDV…RASLSNPVRV (172 aa). Residue 90 to 97 participates in ATP binding; the sequence is AETGSGKT. The short motif at 196 to 199 is the DEAD box element; sequence DEAD. The 145-residue stretch at 275-419 folds into the Helicase C-terminal domain; that stretch reads YLVYLLNEFA…EYQVEKDEVM (145 aa). The tract at residues 436–465 is disordered; the sequence is MKSFDEKKGARGKKFGKGKRSRDDMDQEEG. Over residues 445–455 the composition is skewed to basic residues; it reads ARGKKFGKGKR.

This sequence belongs to the DEAD box helicase family. DDX47/RRP3 subfamily. Interacts with the SSU processome.

The protein resides in the nucleus. The catalysed reaction is ATP + H2O = ADP + phosphate + H(+). Its function is as follows. ATP-dependent rRNA helicase required for pre-ribosomal RNA processing. Involved in the maturation of the 35S-pre-rRNA and to its cleavage to mature 18S rRNA. This is ATP-dependent rRNA helicase rrp3 from Emericella nidulans (strain FGSC A4 / ATCC 38163 / CBS 112.46 / NRRL 194 / M139) (Aspergillus nidulans).